The following is a 182-amino-acid chain: Large ribosomal subunit protein uL5 (182 aa).

It belongs to the universal ribosomal protein uL5 family. Part of the 50S ribosomal subunit; part of the 5S rRNA/L5/L18/L25 subcomplex. Contacts the 5S rRNA and the P site tRNA. Forms a bridge to the 30S subunit in the 70S ribosome.

In terms of biological role, this is one of the proteins that bind and probably mediate the attachment of the 5S RNA into the large ribosomal subunit, where it forms part of the central protuberance. In the 70S ribosome it contacts protein S13 of the 30S subunit (bridge B1b), connecting the 2 subunits; this bridge is implicated in subunit movement. Contacts the P site tRNA; the 5S rRNA and some of its associated proteins might help stabilize positioning of ribosome-bound tRNAs. The sequence is that of Large ribosomal subunit protein uL5 from Borreliella burgdorferi (strain ATCC 35210 / DSM 4680 / CIP 102532 / B31) (Borrelia burgdorferi).